The sequence spans 242 residues: Sugar fermentation stimulation protein homolog (242 aa).

This sequence belongs to the SfsA family.

The chain is Sugar fermentation stimulation protein homolog from Methanosphaera stadtmanae (strain ATCC 43021 / DSM 3091 / JCM 11832 / MCB-3).